The sequence spans 155 residues: SsrA-binding protein (155 aa).

It belongs to the SmpB family.

It is found in the cytoplasm. Required for rescue of stalled ribosomes mediated by trans-translation. Binds to transfer-messenger RNA (tmRNA), required for stable association of tmRNA with ribosomes. tmRNA and SmpB together mimic tRNA shape, replacing the anticodon stem-loop with SmpB. tmRNA is encoded by the ssrA gene; the 2 termini fold to resemble tRNA(Ala) and it encodes a 'tag peptide', a short internal open reading frame. During trans-translation Ala-aminoacylated tmRNA acts like a tRNA, entering the A-site of stalled ribosomes, displacing the stalled mRNA. The ribosome then switches to translate the ORF on the tmRNA; the nascent peptide is terminated with the 'tag peptide' encoded by the tmRNA and targeted for degradation. The ribosome is freed to recommence translation, which seems to be the essential function of trans-translation. The polypeptide is SsrA-binding protein (Chelativorans sp. (strain BNC1)).